We begin with the raw amino-acid sequence, 510 residues long: Protein phosphatase EYA3 (510 aa).

Disordered stretches follow at residues 1-32 (MQEP…SNLS) and 175-233 (YQTE…DASS). Residues 7-16 (QTLSQVNNPD) are compositionally biased toward polar residues. Over residues 192-203 (LPSDSSASPPLS) the composition is skewed to low complexity. 2 positions are modified to phosphoserine: S199 and S203. D246 (nucleophile) is an active-site residue. Mg(2+)-binding residues include D246 and D248. The Proton donor role is filled by D248. Phosphoserine is present on residues S375 and S409. D474 contributes to the Mg(2+) binding site.

It belongs to the HAD-like hydrolase superfamily. EYA family. Interacts with SIX1 and DACH1, and probably SIX2, SIX4 and SIX5. Requires Mg(2+) as cofactor. Post-translationally, ser-203 phosphorylation is required for localization at sites of DNA damage and directing interaction with H2AX. Expressed in branchial arches, CNS and developing eye.

The protein resides in the cytoplasm. It is found in the nucleus. It carries out the reaction O-phospho-L-tyrosyl-[protein] + H2O = L-tyrosyl-[protein] + phosphate. Its function is as follows. Tyrosine phosphatase that specifically dephosphorylates 'Tyr-142' of histone H2AX (H2AXY142ph). 'Tyr-142' phosphorylation of histone H2AX plays a central role in DNA repair and acts as a mark that distinguishes between apoptotic and repair responses to genotoxic stress. Promotes efficient DNA repair by dephosphorylating H2AX, promoting the recruitment of DNA repair complexes containing MDC1. Its function as histone phosphatase probably explains its role in transcription regulation during organogenesis. The phosphatase activity has been shown in vitro. Coactivates SIX1. Seems to coactivate SIX2, SIX4 and SIX5. The repression of precursor cell proliferation in myoblasts by SIX1 is switched to activation through recruitment of EYA3 to the SIX1-DACH1 complex and seems to be dependent on EYA3 phosphatase activity. May be involved in development of the eye. May play a role in mediating the induction and differentiation of cranial placodes. In Mus musculus (Mouse), this protein is Protein phosphatase EYA3 (Eya3).